We begin with the raw amino-acid sequence, 149 residues long: UPF0179 protein MM_0589 (149 aa).

It belongs to the UPF0179 family.

The sequence is that of UPF0179 protein MM_0589 from Methanosarcina mazei (strain ATCC BAA-159 / DSM 3647 / Goe1 / Go1 / JCM 11833 / OCM 88) (Methanosarcina frisia).